The sequence spans 711 residues: Tyrosine-protein phosphatase 2 (711 aa).

The region spanning 21-130 (TESVSWIIDL…FASSHPDAIV (110 aa)) is the Rhodanese domain. Disordered stretches follow at residues 275–306 (APQQ…SRVR) and 329–376 (IIPR…RANK). 2 stretches are compositionally biased toward polar residues: residues 290-306 (SYPS…SRVR) and 340-363 (NAQN…SNTR). One can recognise a Tyrosine-protein phosphatase domain in the interval 433–698 (EMTRSLAFND…KFLYDVVDYL (266 aa)). Cysteine 630 (phosphocysteine intermediate) is an active-site residue.

The protein belongs to the protein-tyrosine phosphatase family. Non-receptor class subfamily.

The protein localises to the cytoplasm. The catalysed reaction is O-phospho-L-tyrosyl-[protein] + H2O = L-tyrosyl-[protein] + phosphate. Functionally, plays a role in inhibiting the onset of mitosis. Dephosphorylates sty1/spc1 and wis1/spc2/sty2. The sequence is that of Tyrosine-protein phosphatase 2 (pyp2) from Schizosaccharomyces pombe (strain 972 / ATCC 24843) (Fission yeast).